Consider the following 501-residue polypeptide: MPFGCVTLGDKKNYNQPSEVTDRYDLGQVIKTEEFCEIFRAKDKTTGKLHTCKKFQKRDGRKVRKAAKNEIGILKMVKHPNILQLVDVFVTRKEYFIFLELATGREVFDWILDQGYYSERDTSNVVRQVLEAVAYLHSLKIVHRNLKLENLVYYNRLKNSKIVISDFHLAKLENGLIKEPCGTPEYLAPEVVGRQRYGRPVDCWAIGVIMYILLSGNPPFYEEVEEDDYENHDKNLFRKILAGDYEFDSPYWDDISQAAKDLVTRLMEVEQDQRITAEEAISHEWISGNAASDKNIKDGVCAQIEKNFARAKWKKAVRVTTLMKRLRAPEQSSTAAAQSASATDTATPGAAGGATAAAASGATSAPEGDAARAAKSDNVAPADRSATPATDGSATPATDGSVTPATDGSITPATDGSVTPATDRSATPATDGRATPATEESTVPTTQSSAMLATKAAATPEPAMAQPDSTAPEGATGQAPPSSKGEEAAGYAQESQREEAS.

The region spanning Tyr-24 to Ile-286 is the Protein kinase domain. Residues Arg-327–Ser-501 are disordered. Over residues Gln-331 to Ala-365 the composition is skewed to low complexity. Polar residues predominate over residues Thr-387 to Pro-428. Residue Thr-435 is modified to Phosphothreonine. Residues Thr-438–Met-451 show a composition bias toward polar residues. Residue Thr-459 is modified to Phosphothreonine.

This sequence belongs to the protein kinase superfamily. CAMK Ser/Thr protein kinase family. Interacts with calmodulin, in the presence of calcium. Ca(2+) serves as cofactor.

It is found in the cell membrane. It localises to the cytoplasmic vesicle membrane. Functionally, does not appear to have detectable kinase activity. The chain is CaM kinase-like vesicle-associated protein (CAMKV) from Homo sapiens (Human).